The chain runs to 85 residues: Cell division topological specificity factor (85 aa).

This sequence belongs to the MinE family.

Functionally, prevents the cell division inhibition by proteins MinC and MinD at internal division sites while permitting inhibition at polar sites. This ensures cell division at the proper site by restricting the formation of a division septum at the midpoint of the long axis of the cell. The protein is Cell division topological specificity factor of Xylella fastidiosa (strain M23).